Reading from the N-terminus, the 733-residue chain is tRNA (guanine(27)-N(2))-dimethyltransferase (733 aa).

The span at 1 to 18 (MENMAEEELLPLEKEEVE) shows a compositional bias: acidic residues. The segment at 1–78 (MENMAEEELL…LASAPEEAKS (78 aa)) is disordered. Residue threonine 26 is modified to Phosphothreonine. Composition is skewed to low complexity over residues 39–49 (PDSALDSAPTP) and 57–73 (PALA…ASAP). Serine 66 bears the Phosphoserine mark. The Nucleolar localization signal motif lies at 135–139 (HKLRR). Residues 184-206 (YHCIICSATITRRTDMLGHVRRH) form a C2H2-type zinc finger. The 462-residue stretch at 227-688 (EILKEADTDV…APLMQFKSIL (462 aa)) folds into the Trm1 methyltransferase domain. The S-adenosyl-L-methionine site is built by arginine 260, aspartate 307, aspartate 357, and alanine 358. Residues cysteine 488, cysteine 491, cysteine 513, and cysteine 515 each contribute to the Zn(2+) site. Residue lysine 585 forms a Glycyl lysine isopeptide (Lys-Gly) (interchain with G-Cter in SUMO2) linkage. Phosphoserine is present on residues serine 612 and serine 707.

It belongs to the class I-like SAM-binding methyltransferase superfamily. Trm1 family. Widely expressed.

The protein localises to the nucleus. Its subcellular location is the nucleolus. The enzyme catalyses guanosine(27) in tRNA(Tyr) + 2 S-adenosyl-L-methionine = N(2)-dimethylguanosine(27) in tRNA(Tyr) + 2 S-adenosyl-L-homocysteine + 2 H(+). Specifically dimethylates a single guanine residue at position 27 of tRNA(Tyr) using S-adenosyl-L-methionine as donor of the methyl groups. Dimethylation at position 27 of tRNA(Tyr) is required for efficient translation of tyrosine codons. Also required to maintain 3-(3-amino-3-carboxypropyl)uridine (acp3U) in the D-loop of several cytoplasmic tRNAs. This is tRNA (guanine(27)-N(2))-dimethyltransferase from Homo sapiens (Human).